The following is a 623-amino-acid chain: MAGPGAPCDPCAPAAVWKRHIVRQLRHRDRTQKALFLELVPAYNHLLEKAELLAKFSEKLKSEPKDAISTRHEDWREEVSGTGPDQVSSPASLRVKWQQEKKGLQLVCGEMAYQVVKKSAALDTLQSQLEERQDRLEALQACVVQLQEARAQQSRQLEERQAENAAQREAYETLLQQAVHQEAALRRLQEEARDLLEQLVQRKARAAAERNLRNERRERANQALVSQELKKAAKRTVSISEIPNTLEDGTKEETVALAPAALPEFSESETCEKWKRPFRSASATSLTLSRCVDVVKGLLDFKKRRGHSVGGAPEQRYQSIPVCVSAQIPSQAQDVLDAHLSEVNAVCFGPNSSLLATGGADRLIHLWNVVGGRLEANQTLEGAGGSITSVDFDPSGSQVLAATYNQAAQLWKVGETQSKETLSGHKDKVTAAKFKLTRHQAVTGSRDRTVKEWDLGRAYCSRTINVLSYCNDVVCGDHIIISGHNDQKIRFWDSRGPHCIQVIPVQGRVTSLHLSYDQLHLLSCSRDNTLKVIDLRISNIRQVFRADGFKCSSDWTKAVFSPDRSYALAGSSNGDLYIWDVNTGKLETSLQGPHCTAVNAVAWCFSGNHVVSVDQGRKVVLWH.

Residues 64-79 are compositionally biased toward basic and acidic residues; it reads PKDAISTRHEDWREEV. Residues 64–93 are disordered; it reads PKDAISTRHEDWREEVSGTGPDQVSSPASL. Positions 116–229 form a coiled coil; it reads VKKSAALDTL…ANQALVSQEL (114 aa). WD repeat units follow at residues 338-377, 382-421, 424-458, 459-502, 504-543, 550-589, and 593-623; these read AHLSEVNAVCFGPNSSLLATGGADRLIHLWNVVGGRLEAN, GAGGSITSVDFDPSGSQVLAATYNQAAQLWKVGETQSKET, GHKDKVTAAKFKLTRHQAVTGSRDRTVKEWDLGRA, YCSR…CIQV, PVQGRVTSLHLSYDQLHLLSCSRDNTLKVIDLRISNIRQV, KCSSDWTKAVFSPDRSYALAGSSNGDLYIWDVNTGKLETS, and PHCTAVNAVAWCFSGNHVVSVDQGRKVVLWH.

The protein belongs to the WD repeat ATG16 family. Homooligomer. Heterooligomer with ATG16L2. Interacts with ATG5. Self-oligomerizes to form a 800-kDa complex composed of ATG12-ATG5 and ATG16L2. Interacts with RAB33B. As to expression, widely expressed.

Its subcellular location is the cytoplasm. It localises to the cytosol. In terms of biological role, may play a role in regulating epithelial homeostasis in an ATG16L1-dependent manner. In Mus musculus (Mouse), this protein is Protein Atg16l2 (Atg16l2).